A 991-amino-acid chain; its full sequence is MATSSFNINELVASHGDKGLLATALVDKTAHEQLEEQLQHQRRGLKVYIRNVLDVKDSEVIRTRYGGKYDLHLAQQELAPHGLAGALRLCETLDCLDFFPRSGLRQDLVLDFGGSWVTHYLRGHNVHCCSPCLGIRDKMRHTERLMSMRKVILNDPQQFDGRQPDFCTKSAAECKVQAHFAISIHGGYDMGFRGLCEAMNAHGTTILKGTMMFDGAMMFDDQGFIPELKCQWRKIKSAFSEEEDATCSAAKLNSSVFSRVRNGKTLIAFDFVEESTMSYVHDWDNIKSFMTDQTYSFNGMTYGIERCVIYAGVMTYKIVGVPGMCPPELIRHCIWFPSMKDYVGLKIPASDDLVKWKTVRILLSTLRETEEIAMRCYNDKKNWMDLFKIILGVLSSKSSTIVINGMSMQSGERIDLNDYHYIGFAILLHTKLKYEQLGKMYDMWNASFIWKWFASMSRPFRVFFSTVVKTLFPTLRPREEKEFLVKLSTFVTFNEECSFDGGKEWDVISSAAFVATQAVADGTILAEEKAKKLADRLAVPVEEVTAIPEVSPTPVDQGTACGLETETSELDSLSAQTRSPIARIAERATAMLEYSAYEKQLHDTTVSNLQRIWCMAGGDNKRNSLESNLKFVFDTYFSVDALVNVHFPTGRWMHPVPEGVVYSVGYNEKGLGPKLDSELYIVNGDCVISNSHDLFSITKSLLAPTGTISQVDGVAGCGKTTAIKSMFNPSTDIIVTANKKSAQDVRYALFKSTDSKEACAFVRTADSILLNDCPTVSRVLVDEVVLLHFGQLCAVMSKLHAVRALCFGDSEQIAFSSRDASFDMRFSKLIPDETSDADTTFRSPQDVVPLVRLMATKALPKGTRTKYSDGAQSKVRKSVTSRAVASVSLVELDPTRFYITMTQADKASLITRAKELNLPKAFYTDRIKTVHESQGISEDHVTLVRLKSTKCDLFKKFSYCLVAVTRHKVTFRYEYCGVLGGDLIANCIPLV.

Residues Val-52–Gln-409 are methyltransferase. An Alphavirus-like MT domain is found at His-72 to Met-290. Residues Cys-686 to Ala-837 form the (+)RNA virus helicase ATP-binding domain. An ATP-dependent helicase region spans residues Val-711–Tyr-973. Position 713–720 (Gly-713–Thr-720) interacts with ATP. A (+)RNA virus helicase C-terminal domain is found at Asp-838–Val-991.

The protein belongs to the bromoviridae replication protein 1a family. Interacts with RNA-directed RNA polymerase 2a.

It localises to the host endoplasmic reticulum membrane. Its function is as follows. Involved in the virus replication. Contains a helicase domain and a methyltransferase domain. The methyltransferase domain is probably involved in viral RNA capping. Involved in the formation of ER membrane spherular invaginations in which RNA replication complexes form. The protein is Replication protein 1a of Cucumber mosaic virus (strain Q) (CMV).